The sequence spans 199 residues: Melanocortin-2 receptor accessory protein 2B (199 aa).

A glycan (N-linked (GlcNAc...) asparagine) is linked at Asn6. The chain crosses the membrane as a helical span at residues 39–59; sequence IVIGFWVGLAVFVIFMFFVLT.

This sequence belongs to the MRAP family. As to quaternary structure, interacts with mc4r. Expressed in adult brain.

It localises to the cell membrane. The protein localises to the endoplasmic reticulum membrane. Its function is as follows. Activator of melanocortin receptor 4 (mc4r), a receptor involved in energy homeostasis. Plays a role after larval development in the control of energy homeostasis and body weight regulation by increasing ligand-sensitivity of mc4r and mc4r-mediated generation of cAMP once the zebrafish begins feeding, increasing the capacity for regulated feeding and growth. This chain is Melanocortin-2 receptor accessory protein 2B (mrap2b), found in Danio rerio (Zebrafish).